Here is a 351-residue protein sequence, read N- to C-terminus: Pentatricopeptide repeat-containing protein At2g40240, mitochondrial (351 aa).

The transit peptide at 1-27 directs the protein to the mitochondrion; it reads MSLLRRRFVKQSVNCITFLQILAERSF. PPR repeat units lie at residues 106-140, 141-175, 176-210, 211-245, 246-280, and 281-315; these read RKNA…RLGL, TPST…SVSM, DVTA…GNSP, DSRS…GVTV, LYST…DLRL, and DSES…GLRM.

The protein belongs to the PPR family. P subfamily.

It is found in the mitochondrion. In Arabidopsis thaliana (Mouse-ear cress), this protein is Pentatricopeptide repeat-containing protein At2g40240, mitochondrial.